The sequence spans 273 residues: SPbeta prophage-derived uncharacterized protein YomF (273 aa).

Residues 119-149 (VIETLQGLIDEAEDTIIRMNERIAECERVTK) are a coiled coil.

The sequence is that of SPbeta prophage-derived uncharacterized protein YomF (yomF) from Bacillus subtilis (strain 168).